Reading from the N-terminus, the 361-residue chain is UDP-N-acetylglucosamine--N-acetylmuramyl-(pentapeptide) pyrophosphoryl-undecaprenol N-acetylglucosamine transferase (361 aa).

UDP-N-acetyl-alpha-D-glucosamine contacts are provided by residues 12–14 (TGG), Asn123, Arg166, Ser192, and Gln293.

Belongs to the glycosyltransferase 28 family. MurG subfamily.

Its subcellular location is the cell inner membrane. The catalysed reaction is di-trans,octa-cis-undecaprenyl diphospho-N-acetyl-alpha-D-muramoyl-L-alanyl-D-glutamyl-meso-2,6-diaminopimeloyl-D-alanyl-D-alanine + UDP-N-acetyl-alpha-D-glucosamine = di-trans,octa-cis-undecaprenyl diphospho-[N-acetyl-alpha-D-glucosaminyl-(1-&gt;4)]-N-acetyl-alpha-D-muramoyl-L-alanyl-D-glutamyl-meso-2,6-diaminopimeloyl-D-alanyl-D-alanine + UDP + H(+). The protein operates within cell wall biogenesis; peptidoglycan biosynthesis. In terms of biological role, cell wall formation. Catalyzes the transfer of a GlcNAc subunit on undecaprenyl-pyrophosphoryl-MurNAc-pentapeptide (lipid intermediate I) to form undecaprenyl-pyrophosphoryl-MurNAc-(pentapeptide)GlcNAc (lipid intermediate II). This Caulobacter vibrioides (strain ATCC 19089 / CIP 103742 / CB 15) (Caulobacter crescentus) protein is UDP-N-acetylglucosamine--N-acetylmuramyl-(pentapeptide) pyrophosphoryl-undecaprenol N-acetylglucosamine transferase.